The sequence spans 302 residues: UDP-N-acetylenolpyruvoylglucosamine reductase (302 aa).

The region spanning 31 to 213 is the FAD-binding PCMH-type domain; that stretch reads KIGGPADFLI…KKIREFREKR (183 aa). R176 is an active-site residue. The active-site Proton donor is S226. Residue E296 is part of the active site.

This sequence belongs to the MurB family. It depends on FAD as a cofactor.

It localises to the cytoplasm. The enzyme catalyses UDP-N-acetyl-alpha-D-muramate + NADP(+) = UDP-N-acetyl-3-O-(1-carboxyvinyl)-alpha-D-glucosamine + NADPH + H(+). Its pathway is cell wall biogenesis; peptidoglycan biosynthesis. Cell wall formation. The protein is UDP-N-acetylenolpyruvoylglucosamine reductase of Carboxydothermus hydrogenoformans (strain ATCC BAA-161 / DSM 6008 / Z-2901).